The following is a 147-amino-acid chain: UPF0260 protein Ent638_2368 (147 aa).

Belongs to the UPF0260 family.

The chain is UPF0260 protein Ent638_2368 from Enterobacter sp. (strain 638).